The sequence spans 332 residues: 5-dehydro-2-deoxygluconokinase 1 (332 aa).

Belongs to the carbohydrate kinase PfkB family.

The catalysed reaction is 5-dehydro-2-deoxy-D-gluconate + ATP = 6-phospho-5-dehydro-2-deoxy-D-gluconate + ADP + H(+). Its pathway is polyol metabolism; myo-inositol degradation into acetyl-CoA; acetyl-CoA from myo-inositol: step 5/7. In terms of biological role, catalyzes the phosphorylation of 5-dehydro-2-deoxy-D-gluconate (2-deoxy-5-keto-D-gluconate or DKG) to 6-phospho-5-dehydro-2-deoxy-D-gluconate (DKGP). The protein is 5-dehydro-2-deoxygluconokinase 1 of Bacillus cereus (strain ZK / E33L).